A 446-amino-acid chain; its full sequence is NAD kinase (446 aa).

5 positions are modified to phosphoserine: S46, S48, S50, S55, and S64.

This sequence belongs to the NAD kinase family. It depends on a divalent metal cation as a cofactor. Widely expressed but not detected in skeletal muscle.

The enzyme catalyses NAD(+) + ATP = ADP + NADP(+) + H(+). The sequence is that of NAD kinase (NADK) from Homo sapiens (Human).